A 176-amino-acid chain; its full sequence is MAVRTIITEGDPRLRQKAIRIRVVDEEVRQLARDLWDTVRAARGLGLAAPQIGVLRRIIVVAIPPDYVEEGDPGVELTLINPEIVRASGRQVGLEGCLSIPGWYGEVPRSMHVTVKALDLDGREVRVKGSGLLARVLQHEIDHLEGILFVDRIEDRSTLRYIPDEEEETAEAATGT.

The Fe cation site is built by cysteine 97 and histidine 139. The active site involves glutamate 140. Histidine 143 contacts Fe cation.

This sequence belongs to the polypeptide deformylase family. It depends on Fe(2+) as a cofactor.

The enzyme catalyses N-terminal N-formyl-L-methionyl-[peptide] + H2O = N-terminal L-methionyl-[peptide] + formate. Removes the formyl group from the N-terminal Met of newly synthesized proteins. Requires at least a dipeptide for an efficient rate of reaction. N-terminal L-methionine is a prerequisite for activity but the enzyme has broad specificity at other positions. The chain is Peptide deformylase from Thermomicrobium roseum (strain ATCC 27502 / DSM 5159 / P-2).